A 381-amino-acid polypeptide reads, in one-letter code: Cobalt-precorrin-5B C(1)-methyltransferase (381 aa).

The protein belongs to the CbiD family.

It catalyses the reaction Co-precorrin-5B + S-adenosyl-L-methionine = Co-precorrin-6A + S-adenosyl-L-homocysteine. The protein operates within cofactor biosynthesis; adenosylcobalamin biosynthesis; cob(II)yrinate a,c-diamide from sirohydrochlorin (anaerobic route): step 6/10. In terms of biological role, catalyzes the methylation of C-1 in cobalt-precorrin-5B to form cobalt-precorrin-6A. This Prochlorococcus marinus (strain SARG / CCMP1375 / SS120) protein is Cobalt-precorrin-5B C(1)-methyltransferase.